The primary structure comprises 504 residues: Acetyltransferase pyiB (504 aa).

A signal peptide spans 1–18 (MGFLSAGGLWASLFRARI). The N-linked (GlcNAc...) asparagine glycan is linked to asparagine 84. Catalysis depends on histidine 181, which acts as the Proton acceptor. 2 N-linked (GlcNAc...) asparagine glycosylation sites follow: asparagine 413 and asparagine 467.

It belongs to the plant acyltransferase family.

The protein operates within mycotoxin biosynthesis. In terms of biological role, acetyltransferase; part of the gene cluster that mediates the biosynthesis of the mycotoxin pyrichalasin H, a tyrosine-derived cytochalasan that inhibits the growth of rice seedlings, but also inhibits lymphocyte capping and actin polymerization and alters cell morphology. Pyrichalasin H is indicated as the responsible agent for the genus-specific pathogenicity of M.grisea toward crabgrass. The first step in the pathway is catalyzed by the O-methyltransferase pyiA which methylates free tyrosine to generate the precursor O-methyltyrosine. The hybrid PKS-NRPS pyiS, assisted by the enoyl reductase pyiC, are responsible for fusion of the O-methyltyrosine precursor and the polyketide backbone. The polyketide synthase module (PKS) of pyiS is responsible for the synthesis of the polyketide backbone and the downstream nonribosomal peptide synthetase (NRPS) amidates the carboxyl end of the polyketide with the O-methyltyrosine precursor. As the NRPS A-domain demonstrates substrate tolerance, pyiS can also use phenylalanine, tyrosine and even para-chlorophenylalanine as amino acid precursor, which leads to the production of novel cytochalasans, including halogenated cytochalasans. Because pyiS lacks a designated enoylreductase (ER) domain, the required activity is provided the enoyl reductase pyiC. Reduction by the hydrolyase pyiE leads to 1,5-dihydropyrrolone, which is substrate for dehydration and intra-molecular Diels-Alder cyclization by the Diels-Alderase pyiF to yield the required isoindolone-fused macrocycle. The tailoring cytochrome P450 monooxygenases piyD and piyG catalyze the hydroxylation at C-18 and C-7, respectivily, whereas the short-chain dehydrogenase/reductase pyiH reduces the carbonyl at C-21 in preparation for the transfer of an acetyl group by the acetyltransferase pyiB. These 3 reactions whose order is not clear yet, lead to the production of O-methylpyrichalasin J, a deacetylated pyrichalasin H. Finally, pyiB to converts O-methylpyrichalasin J into the final product pyrichalasin H via acetylation of C-21. This chain is Acetyltransferase pyiB, found in Pyricularia grisea (Crabgrass-specific blast fungus).